We begin with the raw amino-acid sequence, 54 residues long: Chymosin (54 aa).

Residues 1 to 27 constitute a propeptide, activation peptide; the sequence is SEITRVPLHKGKSLRKALKEHGLLEBF.

The protein belongs to the peptidase A1 family. In terms of assembly, monomer.

The catalysed reaction is Broad specificity similar to that of pepsin A. Clots milk by cleavage of a single 104-Ser-Phe-|-Met-Ala-107 bond in kappa-chain of casein.. In terms of biological role, chymosin is synthesized in the mucosa of the stomach. The enzyme hydrolyzes casein to paracasein. The protein is Chymosin (CYM) of Felis catus (Cat).